The chain runs to 293 residues: D-psicose 3-epimerase (293 aa).

Y6 and A107 together coordinate substrate. E150 serves as the catalytic Proton donor/acceptor. E150 contributes to the Mn(2+) binding site. Residues E156 and 183 to 186 (DTFH) contribute to the substrate site. Mn(2+)-binding residues include D183 and H209. R215 contributes to the substrate binding site. Residue E244 is the Proton donor/acceptor of the active site. A Mn(2+)-binding site is contributed by E244.

It belongs to the hyi family. Homotetramer. It depends on Mn(2+) as a cofactor. The cofactor is Co(2+).

The catalysed reaction is D-allulose = keto-D-fructose. Its function is as follows. Involved in the biosynthesis of D-psicose. Catalyzes the reversible epimerization of D-fructose at the C3 position to yield D-psicose. The enzyme is highly specific for D-psicose and shows very low activity with D-tagatose. In Ruminiclostridium cellulolyticum (strain ATCC 35319 / DSM 5812 / JCM 6584 / H10) (Clostridium cellulolyticum), this protein is D-psicose 3-epimerase.